The following is a 338-amino-acid chain: Anthranilate phosphoribosyltransferase (338 aa).

5-phospho-alpha-D-ribose 1-diphosphate contacts are provided by residues glycine 81, 84-85 (GD), threonine 89, 91-94 (NVST), 109-117 (KHGNRSVSS), and serine 121. Glycine 81 contributes to the anthranilate binding site. Serine 93 contacts Mg(2+). Residue asparagine 112 participates in anthranilate binding. Arginine 167 is a binding site for anthranilate. Residues aspartate 226 and glutamate 227 each contribute to the Mg(2+) site.

Belongs to the anthranilate phosphoribosyltransferase family. In terms of assembly, homodimer. Mg(2+) is required as a cofactor.

The enzyme catalyses N-(5-phospho-beta-D-ribosyl)anthranilate + diphosphate = 5-phospho-alpha-D-ribose 1-diphosphate + anthranilate. It participates in amino-acid biosynthesis; L-tryptophan biosynthesis; L-tryptophan from chorismate: step 2/5. Its function is as follows. Catalyzes the transfer of the phosphoribosyl group of 5-phosphorylribose-1-pyrophosphate (PRPP) to anthranilate to yield N-(5'-phosphoribosyl)-anthranilate (PRA). The sequence is that of Anthranilate phosphoribosyltransferase from Alkalilimnicola ehrlichii (strain ATCC BAA-1101 / DSM 17681 / MLHE-1).